Reading from the N-terminus, the 472-residue chain is Poly(A) polymerase catalytic subunit (472 aa).

Catalysis depends on residues D194 and D196.

The protein belongs to the poxviridae poly(A) polymerase catalytic subunit family. As to quaternary structure, heterodimer of a large (catalytic) subunit and a small (regulatory) subunit.

It carries out the reaction RNA(n) + ATP = RNA(n)-3'-adenine ribonucleotide + diphosphate. Its function is as follows. Polymerase that creates the 3'-poly(A) tail of mRNA's. The chain is Poly(A) polymerase catalytic subunit (PAPL) from Serinus (CNPV).